The primary structure comprises 506 residues: Zinc finger protein 157 (506 aa).

A KRAB domain is found at V27 to S98. 12 consecutive C2H2-type zinc fingers follow at residues F162–H184, Y190–H212, F218–H240, Y246–H268, Y274–H296, Y302–H324, Y330–H352, Y358–H380, Y386–H408, Y414–H436, Y442–H464, and F470–H492.

This sequence belongs to the krueppel C2H2-type zinc-finger protein family.

The protein resides in the nucleus. In terms of biological role, may be involved in transcriptional regulation. The protein is Zinc finger protein 157 (ZNF157) of Homo sapiens (Human).